The following is a 145-amino-acid chain: 3-dehydroquinate dehydratase 2 (145 aa).

The active-site Proton acceptor is tyrosine 22. Positions 73, 79, and 86 each coordinate substrate. Histidine 101 functions as the Proton donor in the catalytic mechanism. Substrate-binding positions include 102–103 and arginine 112; that span reads IS.

The protein belongs to the type-II 3-dehydroquinase family. Homododecamer.

It catalyses the reaction 3-dehydroquinate = 3-dehydroshikimate + H2O. The protein operates within metabolic intermediate biosynthesis; chorismate biosynthesis; chorismate from D-erythrose 4-phosphate and phosphoenolpyruvate: step 3/7. Functionally, catalyzes a trans-dehydration via an enolate intermediate. This is 3-dehydroquinate dehydratase 2 (aroQ2) from Corynebacterium efficiens (strain DSM 44549 / YS-314 / AJ 12310 / JCM 11189 / NBRC 100395).